A 61-amino-acid chain; its full sequence is Opistoporin-4 (61 aa).

Positions 45–61 (EAGQMPFDEFMDILHYY) are excised as a propeptide.

Belongs to the non-disulfide-bridged peptide (NDBP) superfamily. Long chain multifunctional peptide (group 2) family. In terms of tissue distribution, expressed by the venom gland.

The protein resides in the secreted. It is found in the target cell membrane. In terms of biological role, at high concentrations, acts as a pore former in cellular membranes and causes the leakage of the cells. At submicromolar concentrations, degranulates granulocytes and has a weak hemolytic activity against human erythrocytes. Also strongly inhibits the production of superoxide anions. Has a strong antibacterial activity against Gram-negative bacteria but is less active against Gram-positive bacteria. Also has antifungal activity. In Opistophthalmus carinatus (African yellow leg scorpion), this protein is Opistoporin-4.